The primary structure comprises 706 residues: mRNA (2'-O-methyladenosine-N(6)-)-methyltransferase (706 aa).

A disordered region spans residues 1 to 34; sequence MANENHGSPREGASLLSHSPGTSSQSQPCSPKPV. Residues 16–29 are compositionally biased toward polar residues; that stretch reads LSHSPGTSSQSQPC. S30 is modified (phosphoserine). Positions 43 to 77 constitute a WW domain; the sequence is ELVHAGWEKCWSRRESRPYYFNRFTNQSLWEMPVL. The disordered stretch occupies residues 88–148; it reads GLNATPLPQD…QSVPSSPSIP (61 aa). Positions 109 to 113 match the Nuclear localization signal motif; that stretch reads KSRKR. S116 is subject to Phosphoserine. A compositionally biased stretch (low complexity) spans 132–147; that stretch reads IPVTPTSQSVPSSPSI. Phosphothreonine is present on T152. Residues R234 and R264 each coordinate substrate. Residue 552–555 coordinates S-adenosyl-L-methionine; sequence NPPF. Substrate-binding positions include E557 and 587–591; that span reads WREPP. 613–615 is an S-adenosyl-L-methionine binding site; the sequence is FEH. A disordered region spans residues 663–706; that stretch reads TAAYKQSGRSHGSSSSSSSSSSSSEAKDRDSGREQGPSREPHPT. Positions 668 to 686 match the Nuclear localization signal motif; it reads QSGRSHGSSSSSSSSSSSS. Positions 675 to 686 are enriched in low complexity; the sequence is SSSSSSSSSSSS. The segment covering 687-706 has biased composition (basic and acidic residues); it reads EAKDRDSGREQGPSREPHPT.

This sequence belongs to the CAPAM family. As to quaternary structure, interacts with POLR2A; interacts with the phosphorylated C-terminal domain (CTD) of POLR2A.

The protein resides in the nucleus. The enzyme catalyses a 5'-end (N(7)-methyl 5'-triphosphoguanosine)-(2'-O-methyladenosine) in mRNA + S-adenosyl-L-methionine = a 5'-end (N(7)-methyl 5'-triphosphoguanosine)-(N(6),2'-O-dimethyladenosine) in mRNA + S-adenosyl-L-homocysteine + H(+). Cap-specific adenosine methyltransferase activity is inhibited by zinc. In terms of biological role, cap-specific adenosine methyltransferase that catalyzes formation of N(6),2'-O-dimethyladenosine cap (m6A(m)) by methylating the adenosine at the second transcribed position of capped mRNAs. Recruited to the early elongation complex of RNA polymerase II (RNAPII) via interaction with POLR2A and mediates formation of m6A(m) co-transcriptionally. The chain is mRNA (2'-O-methyladenosine-N(6)-)-methyltransferase from Mus musculus (Mouse).